Here is a 349-residue protein sequence, read N- to C-terminus: Probable tRNA pseudouridine synthase B (349 aa).

Aspartate 41 functions as the Nucleophile in the catalytic mechanism. The PUA domain occupies 207-279; sequence YPKVIVKETA…KVIDIDNVLI (73 aa). The span at 300–309 shows a compositional bias: basic and acidic residues; that stretch reads IPVQKPERKL. The disordered stretch occupies residues 300–349; it reads IPVQKPERKLHGNLQGSQEWKDTGNRGNPKRGGTGSKGFSSGFRKRKAKR.

It belongs to the pseudouridine synthase TruB family. Type 2 subfamily.

It carries out the reaction uridine(55) in tRNA = pseudouridine(55) in tRNA. Its function is as follows. Could be responsible for synthesis of pseudouridine from uracil-55 in the psi GC loop of transfer RNAs. The protein is Probable tRNA pseudouridine synthase B of Picrophilus torridus (strain ATCC 700027 / DSM 9790 / JCM 10055 / NBRC 100828 / KAW 2/3).